Reading from the N-terminus, the 350-residue chain is Ribosomal RNA small subunit methyltransferase C (350 aa).

It belongs to the methyltransferase superfamily. RsmC family. Monomer.

The protein resides in the cytoplasm. It carries out the reaction guanosine(1207) in 16S rRNA + S-adenosyl-L-methionine = N(2)-methylguanosine(1207) in 16S rRNA + S-adenosyl-L-homocysteine + H(+). Its function is as follows. Specifically methylates the guanine in position 1207 of 16S rRNA in the 30S particle. This is Ribosomal RNA small subunit methyltransferase C from Sodalis glossinidius (strain morsitans).